The primary structure comprises 90 residues: Cluster 41 protein AFLA_114800 (90 aa).

A helical transmembrane segment spans residues 55-77 (GLLLLCCFYPIGNLILLVRLSLV). An N-linked (GlcNAc...) asparagine glycan is attached at Asn80.

Its subcellular location is the membrane. In terms of biological role, cluster 41 protein; part of the gene cluster 41 that mediates the biosynthesis of an extracellular and diffusible metabolite that is able to stimulate colony sclerotial production. In Aspergillus flavus (strain ATCC 200026 / FGSC A1120 / IAM 13836 / NRRL 3357 / JCM 12722 / SRRC 167), this protein is Cluster 41 protein AFLA_114800.